The primary structure comprises 71 residues: Small ribosomal subunit protein bS21 (71 aa).

It belongs to the bacterial ribosomal protein bS21 family.

This Nitrosococcus oceani (strain ATCC 19707 / BCRC 17464 / JCM 30415 / NCIMB 11848 / C-107) protein is Small ribosomal subunit protein bS21.